A 519-amino-acid polypeptide reads, in one-letter code: Probable DNA ligase (519 aa).

Glu-221 contributes to the ATP binding site. The active-site N6-AMP-lysine intermediate is Lys-223. 6 residues coordinate ATP: Arg-228, Arg-243, Glu-272, Phe-312, Arg-384, and Lys-390.

It belongs to the ATP-dependent DNA ligase family. The cofactor is Mg(2+).

It catalyses the reaction ATP + (deoxyribonucleotide)n-3'-hydroxyl + 5'-phospho-(deoxyribonucleotide)m = (deoxyribonucleotide)n+m + AMP + diphosphate.. Its function is as follows. DNA ligase that seals nicks in double-stranded DNA during DNA replication, DNA recombination and DNA repair. This is Probable DNA ligase from Mycolicibacterium paratuberculosis (strain ATCC BAA-968 / K-10) (Mycobacterium paratuberculosis).